Reading from the N-terminus, the 218-residue chain is Glutathione S-transferase Mu 1 (218 aa).

The 87-residue stretch at 2-88 folds into the GST N-terminal domain; it reads PMILGYWNVR…YLARKHHLDG (87 aa). 7 to 8 serves as a coordination point for glutathione; the sequence is YW. T34 is modified (phosphothreonine). Glutathione-binding positions include 43–46, K50, and 59–60; these read RSQW and NL. S67 carries the phosphoserine modification. Residue 72-73 coordinates glutathione; sequence QS. Residues 90-208 enclose the GST C-terminal domain; sequence TEEERIRADI…KSSRYIATPI (119 aa). Y116 serves as a coordination point for substrate. At S210 the chain carries Phosphoserine.

In terms of assembly, homodimer.

The protein resides in the cytoplasm. The enzyme catalyses RX + glutathione = an S-substituted glutathione + a halide anion + H(+). The catalysed reaction is prostaglandin A2 + glutathione = prostaglandin A2-S-(R)-glutathione. It catalyses the reaction prostaglandin J2 + glutathione = prostaglandin J2-S-(R)-glutathione. It carries out the reaction prostaglandin J2 + glutathione = prostaglandin J2-S-(S)-glutathione. The enzyme catalyses prostaglandin A2 + glutathione = prostaglandin A2-S-(S)-glutathione. The catalysed reaction is 11(S)-hydroxy-14(S),15(S)-epoxy-(5Z,8Z,12E)-eicosatrienoate + glutathione = (11S,15S)-dihydroxy-14(R)-S-glutathionyl-(5Z,8Z,12E)-eicosatrienoate. Its function is as follows. Conjugation of reduced glutathione to a wide number of exogenous and endogenous hydrophobic electrophiles. Involved in the formation of glutathione conjugates of both prostaglandin A2 (PGA2) and prostaglandin J2 (PGJ2). Participates in the formation of novel hepoxilin regioisomers. In Mus musculus (Mouse), this protein is Glutathione S-transferase Mu 1.